We begin with the raw amino-acid sequence, 171 residues long: Auxin-responsive protein IAA33 (171 aa).

2 stretches are compositionally biased toward polar residues: residues 1–11 (MNSFEPQSQDS) and 19–32 (DNST…TTTP). A disordered region spans residues 1–51 (MNSFEPQSQDSLQRRFHQDNSTTQQPRDTTTPFIPKPASKNHNNSNSSSGA). Over residues 40–49 (KNHNNSNSSS) the composition is skewed to low complexity. Residues 72 to 162 (VPPVTVVLEG…KRIRILPVKG (91 aa)) form the PB1 domain.

It belongs to the Aux/IAA family. As to quaternary structure, homodimers and heterodimers.

It is found in the nucleus. Its function is as follows. Aux/IAA proteins are short-lived transcriptional factors that function as repressors of early auxin response genes at low auxin concentrations. Repression is thought to result from the interaction with auxin response factors (ARFs), proteins that bind to the auxin-responsive promoter element (AuxRE). Formation of heterodimers with ARF proteins may alter their ability to modulate early auxin response genes expression. This is Auxin-responsive protein IAA33 (IAA33) from Arabidopsis thaliana (Mouse-ear cress).